The following is a 506-amino-acid chain: AMP phosphorylase (506 aa).

Residues Gly-167, 193–198 (SRAITG), and Thr-202 contribute to the AMP site. The Proton donor role is filled by Asp-255. Ser-263 and Lys-287 together coordinate AMP.

The protein belongs to the thymidine/pyrimidine-nucleoside phosphorylase family. Type 2 subfamily.

It carries out the reaction AMP + phosphate = alpha-D-ribose 1,5-bisphosphate + adenine. The catalysed reaction is CMP + phosphate = cytosine + alpha-D-ribose 1,5-bisphosphate. The enzyme catalyses UMP + phosphate = alpha-D-ribose 1,5-bisphosphate + uracil. Its function is as follows. Catalyzes the conversion of AMP and phosphate to adenine and ribose 1,5-bisphosphate (R15P). Exhibits phosphorylase activity toward CMP and UMP in addition to AMP. Functions in an archaeal AMP degradation pathway, together with R15P isomerase and RubisCO. The protein is AMP phosphorylase of Methanosarcina barkeri (strain Fusaro / DSM 804).